A 135-amino-acid polypeptide reads, in one-letter code: Cilia- and flagella-associated protein 144 (135 aa).

The disordered stretch occupies residues 76–100; the sequence is QGPKKKYSETQTEAQEIGWDPNPLI.

It belongs to the CFAP144 family. Microtubule inner protein component of sperm flagellar doublet microtubules. In terms of tissue distribution, predominantly expressed in tissues containing motile cilia.

It is found in the cytoplasm. Its subcellular location is the cytoskeleton. It localises to the cilium axoneme. The protein resides in the flagellum axoneme. The polypeptide is Cilia- and flagella-associated protein 144 (Mus musculus (Mouse)).